We begin with the raw amino-acid sequence, 1824 residues long: Treslin (1824 aa).

10 disordered regions span residues 542-572 (EFYQSSTAGSSGSLRSKKRGTQCTPVRQKMK), 590-622 (AQKTQGDSGSAGSGKGTEKGGKKSSGDRTKPGL), 907-973 (SPSK…SGES), 1001-1035 (RHSSVFYSSSQPRSRNLDRVVSSSQLSHSEGKGKF), 1098-1117 (AVGCRTPQSPRTPNRTVGDN), 1189-1221 (VPENQVNVPDSPVFAKRHSPRLVTPGKNSSPEE), 1293-1388 (PFCN…DDDK), 1459-1518 (FEGK…QSSP), 1617-1650 (TPTHHPTSSQSPLASPLTPSPQSRGWPTPENLNS), and 1803-1824 (PLCQPRRRRTPSRTYSRKKLLD). Residues 546 to 555 (SSTAGSSGSL) show a composition bias toward low complexity. Positions 562–572 (TQCTPVRQKMK) are enriched in polar residues. Positions 605–619 (GTEKGGKKSSGDRTK) are enriched in basic and acidic residues. Positions 907–921 (SPSKKSKMPRSQSVS) are enriched in polar residues. Residues 932 to 952 (SDVDNDDRHTLLTKKVSETPL) show a composition bias toward basic and acidic residues. Composition is skewed to polar residues over residues 1005–1014 (VFYSSSQPRS) and 1103–1114 (TPQSPRTPNRTV). Residues 1319 to 1345 (RSGNTPVKESCSPSSNSQGITGTSPSP) show a composition bias toward polar residues. Residues 1347–1370 (KSLSSAVAKSSPSPSFGPSRSGVG) are compositionally biased toward low complexity. A compositionally biased stretch (polar residues) spans 1462–1472 (KQTTSTGTPLT). Residues 1480–1490 (TPDRRQREAEA) are compositionally biased toward basic and acidic residues. 2 stretches are compositionally biased toward polar residues: residues 1617–1629 (TPTHHPTSSQSPL) and 1636–1650 (SPQSRGWPTPENLNS). The span at 1807–1824 (PRRRRTPSRTYSRKKLLD) shows a compositional bias: basic residues.

The protein belongs to the treslin family. Interacts with topbp1 (via BRCT domains); interaction takes place in a cdk2-dependent manner. Component of the replisome complex.

It localises to the nucleus. Its function is as follows. Regulator of DNA replication and S/M and G2/M checkpoints. Regulates the triggering of DNA replication initiation via its interaction with topbp1 by participating in cdk2-mediated loading of cdc45l onto replication origins. Required for the transition from pre-replication complex (pre-RC) to pre-initiation complex (pre-IC). Required to prevent mitotic entry after treatment with ionizing radiation. In Danio rerio (Zebrafish), this protein is Treslin (ticrr).